Reading from the N-terminus, the 259-residue chain is Flagellar brake protein YcgR (259 aa).

The PilZ domain occupies 129-246; it reads QRREFYRLQT…DNAIQRYIFK (118 aa).

It belongs to the YcgR family. In terms of assembly, monomer. Interacts with the flagellar basal bodies.

Its subcellular location is the bacterial flagellum basal body. In terms of biological role, acts as a flagellar brake, regulating swimming and swarming in a bis-(3'-5') cyclic diguanylic acid (c-di-GMP)-dependent manner. Binds 1 c-di-GMP dimer per subunit. Increasing levels of c-di-GMP lead to decreased motility. This Azoarcus sp. (strain BH72) protein is Flagellar brake protein YcgR.